Consider the following 634-residue polypeptide: DNA-directed RNA polymerase subunit gamma (634 aa).

Zn(2+) contacts are provided by cysteine 74, cysteine 76, cysteine 89, and cysteine 92. 3 residues coordinate Mg(2+): aspartate 471, aspartate 473, and aspartate 475.

The protein belongs to the RNA polymerase beta' chain family. RpoC1 subfamily. In terms of assembly, in cyanobacteria the RNAP catalytic core is composed of 2 alpha, 1 beta, 1 beta', 1 gamma and 1 omega subunit. When a sigma factor is associated with the core the holoenzyme is formed, which can initiate transcription. The cofactor is Mg(2+). Zn(2+) is required as a cofactor.

It carries out the reaction RNA(n) + a ribonucleoside 5'-triphosphate = RNA(n+1) + diphosphate. Its function is as follows. DNA-dependent RNA polymerase catalyzes the transcription of DNA into RNA using the four ribonucleoside triphosphates as substrates. This is DNA-directed RNA polymerase subunit gamma from Prochlorococcus marinus (strain MIT 9303).